Here is a 394-residue protein sequence, read N- to C-terminus: Exodeoxyribonuclease 7 large subunit (394 aa).

This sequence belongs to the XseA family. Heterooligomer composed of large and small subunits.

The protein localises to the cytoplasm. It catalyses the reaction Exonucleolytic cleavage in either 5'- to 3'- or 3'- to 5'-direction to yield nucleoside 5'-phosphates.. Functionally, bidirectionally degrades single-stranded DNA into large acid-insoluble oligonucleotides, which are then degraded further into small acid-soluble oligonucleotides. This is Exodeoxyribonuclease 7 large subunit from Thermotoga sp. (strain RQ2).